A 330-amino-acid polypeptide reads, in one-letter code: AH receptor-interacting protein (330 aa).

The PPIase FKBP-type domain occupies 31-121; it reads GTKATFHFRT…KDPLEGQRHC (91 aa). Serine 43 bears the Phosphoserine mark. 3 TPR repeats span residues 179 to 212, 231 to 264, and 265 to 298; these read VPLIHQEGNRLYREGQVKEAAAKYYDAIACLKNL, TPLLLNYCQCKLVAQEYYEVLDHCSSILNKYDDN, and VKAYFKRGKAHAAVWNAQEAQADFAKVLELDPAL.

As to quaternary structure, interacts with RET in the pituitary gland; this interaction prevents the formation of the AIP-survivin complex.

The protein resides in the cytoplasm. Functionally, may play a positive role in AHR-mediated (aromatic hydrocarbon receptor) signaling, possibly by influencing its receptivity for ligand and/or its nuclear targeting. The protein is AH receptor-interacting protein (Aip) of Rattus norvegicus (Rat).